A 141-amino-acid chain; its full sequence is Large ribosomal subunit protein uL11 (141 aa).

The protein belongs to the universal ribosomal protein uL11 family. In terms of assembly, part of the ribosomal stalk of the 50S ribosomal subunit. Interacts with L10 and the large rRNA to form the base of the stalk. L10 forms an elongated spine to which L12 dimers bind in a sequential fashion forming a multimeric L10(L12)X complex.

Its function is as follows. Forms part of the ribosomal stalk which helps the ribosome interact with GTP-bound translation factors. In Acidianus ambivalens (Desulfurolobus ambivalens), this protein is Large ribosomal subunit protein uL11.